The sequence spans 141 residues: Large ribosomal subunit protein uL11 (141 aa).

This sequence belongs to the universal ribosomal protein uL11 family. Part of the ribosomal stalk of the 50S ribosomal subunit. Interacts with L10 and the large rRNA to form the base of the stalk. L10 forms an elongated spine to which L12 dimers bind in a sequential fashion forming a multimeric L10(L12)X complex. In terms of processing, one or more lysine residues are methylated.

Forms part of the ribosomal stalk which helps the ribosome interact with GTP-bound translation factors. The chain is Large ribosomal subunit protein uL11 from Helicobacter pylori (strain P12).